The following is a 303-amino-acid chain: Bifunctional protein FolD (303 aa).

NADP(+) is bound by residues glycine 168–serine 170, threonine 197, and valine 238.

This sequence belongs to the tetrahydrofolate dehydrogenase/cyclohydrolase family. Homodimer.

It carries out the reaction (6R)-5,10-methylene-5,6,7,8-tetrahydrofolate + NADP(+) = (6R)-5,10-methenyltetrahydrofolate + NADPH. The catalysed reaction is (6R)-5,10-methenyltetrahydrofolate + H2O = (6R)-10-formyltetrahydrofolate + H(+). Its pathway is one-carbon metabolism; tetrahydrofolate interconversion. Its function is as follows. Catalyzes the oxidation of 5,10-methylenetetrahydrofolate to 5,10-methenyltetrahydrofolate and then the hydrolysis of 5,10-methenyltetrahydrofolate to 10-formyltetrahydrofolate. The sequence is that of Bifunctional protein FolD from Desulfosudis oleivorans (strain DSM 6200 / JCM 39069 / Hxd3) (Desulfococcus oleovorans).